Reading from the N-terminus, the 240-residue chain is Pro-opiomelanocortin B (240 aa).

The N-terminal stretch at 1 to 36 (MFGTFLQNQSVRLNMVCAPWLLAVVVVCVCNPGVEG) is a signal peptide. Q37 carries the post-translational modification Pyrrolidone carboxylic acid. H111 is a propeptide. An N-acetylserine; in Corticotropin modification is found at S112. I124 is modified (isoleucine amide).

It belongs to the POMC family. Post-translationally, specific enzymatic cleavages at paired basic residues yield the different active peptides. In terms of processing, acetylation of beta-endorphin occurs in a tissue-specific manner. Pituitary and hypothalamus of adult diploid animals.

It is found in the secreted. Functionally, stimulates the adrenal glands to release cortisol. Melanocyte-stimulating hormone alpha: Anorexigenic peptide. Increases the pigmentation of skin by increasing melanin production in melanocytes. Its function is as follows. Melanocyte-stimulating hormone beta: Increases the pigmentation of skin by increasing melanin production in melanocytes. In terms of biological role, beta-endorphin: Endogenous orexigenic opiate. Functionally, endogenous opiate. The protein is Pro-opiomelanocortin B (pomcb) of Oncorhynchus mykiss (Rainbow trout).